A 39-amino-acid chain; its full sequence is Photosystem II reaction center protein J (39 aa).

A helical membrane pass occupies residues 9 to 29; the sequence is LWLVATVGGMAAITVLGIFIY.

The protein belongs to the PsbJ family. In terms of assembly, PSII is composed of 1 copy each of membrane proteins PsbA, PsbB, PsbC, PsbD, PsbE, PsbF, PsbH, PsbI, PsbJ, PsbK, PsbL, PsbM, PsbT, PsbX, PsbY, PsbZ, Psb30/Ycf12, at least 3 peripheral proteins of the oxygen-evolving complex and a large number of cofactors. It forms dimeric complexes.

The protein localises to the plastid. Its subcellular location is the chloroplast thylakoid membrane. Its function is as follows. One of the components of the core complex of photosystem II (PSII). PSII is a light-driven water:plastoquinone oxidoreductase that uses light energy to abstract electrons from H(2)O, generating O(2) and a proton gradient subsequently used for ATP formation. It consists of a core antenna complex that captures photons, and an electron transfer chain that converts photonic excitation into a charge separation. This Porphyra purpurea (Red seaweed) protein is Photosystem II reaction center protein J.